The chain runs to 275 residues: uncharacterized protein (275 aa).

Residues 20 to 22 (RAQ), 41 to 42 (DI), 80 to 81 (DI), and N107 each bind NAD(+). S160 lines the substrate pocket. The active-site Proton acceptor is the Y173. NAD(+) is bound by residues K177 and 206–208 (VDT).

The protein belongs to the short-chain dehydrogenases/reductases (SDR) family.

This is an uncharacterized protein from Mycobacterium tuberculosis (strain CDC 1551 / Oshkosh).